The following is a 147-amino-acid chain: Cyanate hydratase (147 aa).

Catalysis depends on residues Arg88, Glu91, and Ser114.

It belongs to the cyanase family.

The catalysed reaction is cyanate + hydrogencarbonate + 3 H(+) = NH4(+) + 2 CO2. Its function is as follows. Catalyzes the reaction of cyanate with bicarbonate to produce ammonia and carbon dioxide. This chain is Cyanate hydratase, found in Polynucleobacter asymbioticus (strain DSM 18221 / CIP 109841 / QLW-P1DMWA-1) (Polynucleobacter necessarius subsp. asymbioticus).